The chain runs to 389 residues: GTPase Obg (389 aa).

The 159-residue stretch at 1-159 folds into the Obg domain; that stretch reads MKFVDEAVIK…RELRLELLLL (159 aa). Residues 160 to 333 form the OBG-type G domain; sequence ADVGMLGLPN…LCYKLADFME (174 aa). Residues 166–173, 191–195, 213–216, 283–286, and 314–316 each bind GTP; these read GLPNAGKS, FTTLI, DIPG, NKVD, and SAV. Residues serine 173 and threonine 193 each coordinate Mg(2+). Positions 359 to 389 are disordered; that stretch reads NQGEVITEDDDDDWDDWDDEEDDGHVIYVRE. Over residues 364–381 the composition is skewed to acidic residues; that stretch reads ITEDDDDDWDDWDDEEDD.

This sequence belongs to the TRAFAC class OBG-HflX-like GTPase superfamily. OBG GTPase family. As to quaternary structure, monomer. Mg(2+) is required as a cofactor.

It is found in the cytoplasm. Its function is as follows. An essential GTPase which binds GTP, GDP and possibly (p)ppGpp with moderate affinity, with high nucleotide exchange rates and a fairly low GTP hydrolysis rate. Plays a role in control of the cell cycle, stress response, ribosome biogenesis and in those bacteria that undergo differentiation, in morphogenesis control. In Vibrio vulnificus (strain CMCP6), this protein is GTPase Obg.